The sequence spans 464 residues: Armadillo repeat-containing protein 6 homolog (464 aa).

Residue Thr-9 is modified to Phosphothreonine. ARM repeat units lie at residues Ala-235–Val-275, Gly-287–Val-331, Ala-332–Gly-374, and Ile-375–Gly-418.

Belongs to the ARMC6 family.

This is Armadillo repeat-containing protein 6 homolog from Drosophila melanogaster (Fruit fly).